The sequence spans 1135 residues: Nonribosomal peptide synthetase 9 (1135 aa).

The interval 23–77 (TKQITTATYIKLAWAVVISCNTGSNDTVFGITVNGRGAPIDGAGEMTGATIATIP) is condensation 1. An adenylation region spans residues 177–562 (SYAELIRSAN…RRIDEIQEAT (386 aa)). A disordered region spans residues 485-507 (GPSPPVGRSSSNRAGSGRCAMGS). Positions 491 to 502 (GRSSSNRAGSGR) are enriched in low complexity. The Carrier domain occupies 672–748 (APSNRVEQDL…AIANKIGDVQ (77 aa)). Serine 709 carries the O-(pantetheine 4'-phosphoryl)serine modification. Residues 746–999 (DVQRAAIKLV…TTLWPVVAQV (254 aa)) are condensation 2.

It belongs to the NRP synthetase family.

In terms of biological role, nonribosomal peptide synthesis (NRPS) is a key mechanism responsible for the biosynthesis of bioactive metabolites which are potentially contributing to organismal virulence. The polypeptide is Nonribosomal peptide synthetase 9 (NRPS9) (Aspergillus fumigatus (strain ATCC MYA-4609 / CBS 101355 / FGSC A1100 / Af293) (Neosartorya fumigata)).